The chain runs to 706 residues: Semenogelin-2 (706 aa).

The N-terminal stretch at 1-23 is a signal peptide; the sequence is MKSIILFVLSLLLILEKQAAVMG. Disordered stretches follow at residues 25–62, 131–156, and 276–678; these read KGGS…SKGS, KGGQ…KGIF, and NLNQ…SGAH. Residues 50-59 show a composition bias toward basic and acidic residues; that stretch reads GQKDKQHTES. Over residues 137–151 the composition is skewed to polar residues; the sequence is HGTQNPSQDQGNSPS. Residues 297–308 are compositionally biased toward basic and acidic residues; it reads TEERQPNHEENS. Positions 329–339 are enriched in polar residues; it reads KSQNQVTIPSQ. Residues 340 to 349 are compositionally biased toward basic and acidic residues; it reads DQEHGHKENK. The segment covering 389–399 has biased composition (polar residues); the sequence is KSQNQVTIPSQ. Basic and acidic residues predominate over residues 400–409; sequence DQEHGHKENK. A compositionally biased stretch (polar residues) spans 449 to 459; the sequence is KSQNQVTIPSQ. The span at 460-469 shows a compositional bias: basic and acidic residues; that stretch reads DQEHGHKENK. Positions 509-519 are enriched in polar residues; it reads KSQNQVAIPSQ. Residues 520–529 show a composition bias toward basic and acidic residues; sequence DQEHGHKENK. The segment covering 569–579 has biased composition (polar residues); that stretch reads KSQNQVTIPSQ. The segment covering 580 to 589 has biased composition (basic and acidic residues); it reads DQEHGHKENK. Composition is skewed to polar residues over residues 611 to 622 and 630 to 653; these read KDVSQSSLSFQT and SQIQ…NSGK. The span at 654 to 670 shows a compositional bias: basic and acidic residues; sequence SADREQDLLSHEQEGRY.

The protein belongs to the semenogelin family. In terms of assembly, interacts with SERPINA5.

It is found in the secreted. Participates in the formation of a gel matrix (sperm coagulum) entrapping the accessory gland secretions and ejaculated spermatozoa. This is Semenogelin-2 (SEMG2) from Macaca mulatta (Rhesus macaque).